The following is a 459-amino-acid chain: 3-carboxy-cis,cis-muconate cycloisomerase (459 aa).

Belongs to the class-II fumarase/aspartase family. In terms of assembly, homotetramer.

Its subcellular location is the cytoplasm. The enzyme catalyses 2-(carboxymethyl)-5-oxo-2,5-dihydro-2-furoate = 3-carboxy-cis,cis-muconate + H(+). It functions in the pathway aromatic compound metabolism; beta-ketoadipate pathway; 5-oxo-4,5-dihydro-2-furylacetate from 3-carboxy-cis,cis-muconate: step 1/2. Catalyzes an anti cycloisomerization. In Pseudomonas aeruginosa (strain ATCC 15692 / DSM 22644 / CIP 104116 / JCM 14847 / LMG 12228 / 1C / PRS 101 / PAO1), this protein is 3-carboxy-cis,cis-muconate cycloisomerase (pcaB).